Consider the following 416-residue polypeptide: UV excision repair protein RAD23 homolog B (416 aa).

The region spanning 1–79 (MQVTLKTLQQ…VVVMVTKPKA (79 aa)) is the Ubiquitin-like domain. The segment covering 83–111 (AVPATTQPSSTPSPTAVSSSPAVAAAQAP) has biased composition (low complexity). The tract at residues 83–175 (AVPATTQPSS…STPGDSSRSN (93 aa)) is disordered. A compositionally biased stretch (pro residues) spans 112–121 (APTPALPPTS). The segment covering 122 to 143 (TPASTAPASTTASSEPAPAGAT) has biased composition (low complexity). Threonine 155 bears the Phosphothreonine mark. Serine 160 and serine 174 each carry phosphoserine. Threonine 186 carries the post-translational modification Phosphothreonine. In terms of domain architecture, UBA 1 spans 188–228 (QSYENMVTEIMSMGYEREQVIAALRASFNNPDRAVEYLLMG). A Phosphoserine modification is found at serine 199. Phosphotyrosine is present on tyrosine 202. The 44-residue stretch at 274-317 (HPLEFLRNQPQFQQMRQIIQQNPSLLPALLQQIGRENPQLLQQI) folds into the STI1 domain. Residues 333-356 (QEAGSQGGGGGGGGGGGGGGGGGI) are disordered. Residues 337–356 (SQGGGGGGGGGGGGGGGGGI) show a composition bias toward gly residues. The UBA 2 domain occupies 371–411 (PQEKEAIERLKALGFPEGLVIQAYFACEKNENLAANFLLQQ).

It belongs to the RAD23 family. As to quaternary structure, component of the XPC complex composed of XPC, RAD23B and CETN2. Interacts with NGLY1 and PSMC1. Interacts with ATXN3. Interacts with AMFR. Interacts with VCP; the interaction is indirect and mediated by NGLY1.

It is found in the nucleus. It localises to the cytoplasm. Functionally, multiubiquitin chain receptor involved in modulation of proteasomal degradation. Binds to polyubiquitin chains. Proposed to be capable to bind simultaneously to the 26S proteasome and to polyubiquitinated substrates and to deliver ubiquitinated proteins to the proteasome. May play a role in endoplasmic reticulum-associated degradation (ERAD) of misfolded glycoproteins by association with PNGase and delivering deglycosylated proteins to the proteasome. Its function is as follows. Involved in global genome nucleotide excision repair (GG-NER) by acting as component of the XPC complex. Cooperatively with Cetn2 appears to stabilize Xpc. May protect Xpc from proteasomal degradation. The XPC complex is proposed to represent the first factor bound at the sites of DNA damage and together with other core recognition factors, Xpa, RPA and the TFIIH complex, is part of the pre-incision (or initial recognition) complex. The XPC complex recognizes a wide spectrum of damaged DNA characterized by distortions of the DNA helix such as single-stranded loops, mismatched bubbles or single-stranded overhangs. The orientation of XPC complex binding appears to be crucial for inducing a productive NER. XPC complex is proposed to recognize and to interact with unpaired bases on the undamaged DNA strand which is followed by recruitment of the TFIIH complex and subsequent scanning for lesions in the opposite strand in a 5'-to-3' direction by the NER machinery. Cyclobutane pyrimidine dimers (CPDs) which are formed upon UV-induced DNA damage esacpe detection by the XPC complex due to a low degree of structural perurbation. Instead they are detected by the UV-DDB complex which in turn recruits and cooperates with the XPC complex in the respective DNA repair. In vitro, the Xpc:Rad23b dimer is sufficient to initiate NER; it preferentially binds to cisplatin and UV-damaged double-stranded DNA and also binds to a variety of chemically and structurally diverse DNA adducts. Xpc:Rad23b contacts DNA both 5' and 3' of a cisplatin lesion with a preference for the 5' side. Xpc:Rad23bB induces a bend in DNA upon binding. Xpc:Rad23b stimulates the activity of DNA glycosylases Tdg and Smug1. This Mus musculus (Mouse) protein is UV excision repair protein RAD23 homolog B (Rad23b).